A 399-amino-acid polypeptide reads, in one-letter code: MTNSLFETAKPILEKLQAHHFQAYFVGGSVRDYLMNRPIHDIDITTSATPDEIETVFDKTIPIGREHGTINVIYKGEQYEVTTFRSEGDYDDHRRPNEVFFVRNLYDDVQRRDFTMNAIAMDINYQIFDYFEGQQDIKHQLIRTVGNPDERFDEDALRIIRGLRFQSQFGFHLEEATFTAMLNHIADIKYLAIERIVVELKKLTNGDFVSKSFNNLKHFMAFKYIPFFKHYDITKFTLRNAMPFTTFVAFLISQQREIDANIADLKVSNNEKKRIKTLVQLIDQIDEVQTKSQLKLFVYDYGKKDILEVLSYLDELKRNRITSISPLIVNDQTVTEVAKQLPMLSRSEMDINGKDILEIANKKSGPWLKETLREVEYAIISGEVVNFKPELKKWVKTRV.

Positions 28 and 31 each coordinate ATP. G28 and R31 together coordinate CTP. Mg(2+) contacts are provided by D41 and D43. ATP is bound by residues R112, D155, R158, R161, and R164. Positions 112, 155, 158, 161, and 164 each coordinate CTP.

The protein belongs to the tRNA nucleotidyltransferase/poly(A) polymerase family. Bacterial CCA-adding enzyme type 3 subfamily. Homodimer. Mg(2+) is required as a cofactor.

It catalyses the reaction a tRNA precursor + 2 CTP + ATP = a tRNA with a 3' CCA end + 3 diphosphate. It carries out the reaction a tRNA with a 3' CCA end + 2 CTP + ATP = a tRNA with a 3' CCACCA end + 3 diphosphate. Catalyzes the addition and repair of the essential 3'-terminal CCA sequence in tRNAs without using a nucleic acid template. Adds these three nucleotides in the order of C, C, and A to the tRNA nucleotide-73, using CTP and ATP as substrates and producing inorganic pyrophosphate. tRNA 3'-terminal CCA addition is required both for tRNA processing and repair. Also involved in tRNA surveillance by mediating tandem CCA addition to generate a CCACCA at the 3' terminus of unstable tRNAs. While stable tRNAs receive only 3'-terminal CCA, unstable tRNAs are marked with CCACCA and rapidly degraded. The chain is CCA-adding enzyme from Staphylococcus saprophyticus subsp. saprophyticus (strain ATCC 15305 / DSM 20229 / NCIMB 8711 / NCTC 7292 / S-41).